The primary structure comprises 303 residues: DnaJ homolog subfamily C member 17 (303 aa).

The J domain occupies D11–R76. Composition is skewed to basic and acidic residues over residues A78–Q106 and I150–E166. Disordered regions lie at residues A78–L124 and I150–T170. Positions K178–G249 constitute an RRM domain. An N6-methyllysine modification is found at K264.

It localises to the cytoplasm. Its subcellular location is the nucleus. Its function is as follows. May negatively affect PAX8-induced thyroglobulin/TG transcription. The polypeptide is DnaJ homolog subfamily C member 17 (Dnajc17) (Rattus norvegicus (Rat)).